Reading from the N-terminus, the 578-residue chain is Protein LIKE EARLY STARVATION, chloroplastic (578 aa).

A chloroplast-targeting transit peptide spans 1 to 56 (MALRLGVSIGAALGSSHWDDGQRVRQRDFSASVNFTAPVTSRRSLRGSRTGVRILR). Disordered regions lie at residues 146–166 (NNSG…TSEV) and 187–206 (SETS…TPPQ).

It belongs to the ESV1 family. Expressed ubiquitously.

Its subcellular location is the plastid. The protein localises to the chloroplast stroma. In terms of biological role, binds preferentially to highly ordered alpha-glucans, such as starch and crystalline maltodextrins. Involved in the organization of the starch granule matrix, thus influencing starch turnover by modulating the accessibility of starch polymers to modifying and degrading enzymes involved in phosphorylation, hydrolyzes and synthesis, including starch synthases (SSI and SSIII), starch phosphorylases (PHS1), isoamylase, beta-amylase, glucan water dikinase (GWD) and phosphoglucan water dikinase (PWD). This is Protein LIKE EARLY STARVATION, chloroplastic from Arabidopsis thaliana (Mouse-ear cress).